Reading from the N-terminus, the 347-residue chain is MGGTAVGGVIGVRCGVPAVLLCLGALLCANVLLYFYLDALYQNTNPPSAHTQCPPRHFKVGTMSSCSPWLKCPEIRSGVRRVKLIGQGAVKKVYLSEWQGQKVALSVLSSDQYADDFLHGLSMLRALQSSHVVTLVGVCEEDAVFVTEYHPLGSVLTLDTTLAQERYRWRNSWHTRLQLAIDYVAFLAYLHSSPAGIRVMCDSNDLHKTLSQFLLASDMRLLANDLDALPEVEKGGLGVKCGHHELTGDFVAPEQLWPYGEDFSFSDEAMPGYDEKTDIWKIPDVTRFLLGDVLGGDVIHFHLFQIYSECKRKEAHMRPTAREVLSVYRSVYDSMMESQSQRVRDML.

Residues 1 to 14 (MGGTAVGGVIGVRC) are Cytoplasmic-facing. A helical; Signal-anchor for type II membrane protein transmembrane segment spans residues 15–35 (GVPAVLLCLGALLCANVLLYF). Residues 36–347 (YLDALYQNTN…SQSQRVRDML (312 aa)) are Lumenal-facing. The Protein kinase domain maps to 79–347 (VRRVKLIGQG…SQSQRVRDML (269 aa)).

It belongs to the protein kinase superfamily. Ser/Thr protein kinase family. STKL subfamily.

Its subcellular location is the endoplasmic reticulum membrane. It carries out the reaction 3-O-[beta-D-GalNAc-(1-&gt;3)-beta-D-GlcNAc-(1-&gt;4)-alpha-D-Man]-L-Thr-[protein] + ATP = 3-O-[beta-D-GalNAc-(1-&gt;3)-beta-D-GlcNAc-(1-&gt;4)-(O-6-P-alpha-D-Man)]-Thr-[protein] + ADP + H(+). Protein O-mannose kinase that specifically mediates phosphorylation at the 6-position of an O-mannose of the trisaccharide (N-acetylgalactosamine (GalNAc)-beta-1,3-N-acetylglucosamine (GlcNAc)-beta-1,4-mannose) to generate phosphorylated O-mannosyl trisaccharide (N-acetylgalactosamine-beta-1,3-N-acetylglucosamine-beta-1,4-(phosphate-6-)mannose). Phosphorylated O-mannosyl trisaccharide is a carbohydrate structure present in alpha-dystroglycan (dag1), which is required for binding laminin G-like domain-containing extracellular proteins with high affinity. Only shows kinase activity when the GalNAc-beta-3-GlcNAc-beta-terminus is linked to the 4-position of O-mannose, suggesting that this disaccharide serves as the substrate recognition motif. In Danio rerio (Zebrafish), this protein is Protein O-mannose kinase (pomk).